A 239-amino-acid chain; its full sequence is 4-hydroxy-tetrahydrodipicolinate reductase (239 aa).

NAD(+) contacts are provided by residues 8–13 (GSTGKM), 78–80 (GTT), and 102–105 (SANM). H134 (proton donor/acceptor) is an active-site residue. Residue H135 coordinates (S)-2,3,4,5-tetrahydrodipicolinate. Residue K138 is the Proton donor of the active site. Residue 144–145 (GT) coordinates (S)-2,3,4,5-tetrahydrodipicolinate.

The protein belongs to the DapB family.

The protein resides in the cytoplasm. It catalyses the reaction (S)-2,3,4,5-tetrahydrodipicolinate + NAD(+) + H2O = (2S,4S)-4-hydroxy-2,3,4,5-tetrahydrodipicolinate + NADH + H(+). It carries out the reaction (S)-2,3,4,5-tetrahydrodipicolinate + NADP(+) + H2O = (2S,4S)-4-hydroxy-2,3,4,5-tetrahydrodipicolinate + NADPH + H(+). It participates in amino-acid biosynthesis; L-lysine biosynthesis via DAP pathway; (S)-tetrahydrodipicolinate from L-aspartate: step 4/4. In terms of biological role, catalyzes the conversion of 4-hydroxy-tetrahydrodipicolinate (HTPA) to tetrahydrodipicolinate. The protein is 4-hydroxy-tetrahydrodipicolinate reductase of Rickettsia africae (strain ESF-5).